The chain runs to 642 residues: UvrABC system protein C (642 aa).

One can recognise a GIY-YIG domain in the interval 20 to 97 (ERCGVYRMFD…IKKFQPKFNI (78 aa)). Residues 207-242 (KELQENLSKKMEELSSQMRFEEAAEIRDRIKALSYV) form the UVR domain.

Belongs to the UvrC family. Interacts with UvrB in an incision complex.

The protein resides in the cytoplasm. The UvrABC repair system catalyzes the recognition and processing of DNA lesions. UvrC both incises the 5' and 3' sides of the lesion. The N-terminal half is responsible for the 3' incision and the C-terminal half is responsible for the 5' incision. The sequence is that of UvrABC system protein C from Rickettsia felis (strain ATCC VR-1525 / URRWXCal2) (Rickettsia azadi).